Reading from the N-terminus, the 85-residue chain is U4-theraphotoxin-Hhn1ab (85 aa).

The N-terminal stretch at 1 to 22 (MKVTLIAILTCAAVLVLHTTAA) is a signal peptide. Positions 23 to 48 (EELEAESQLMEVGMPDTELAAVDEER) are excised as a propeptide. Disulfide bonds link Cys-56/Cys-77 and Cys-71/Cys-82.

It belongs to the neurotoxin 12 (Hwtx-2) family. 02 (Hwtx-2) subfamily. In terms of tissue distribution, expressed by the venom gland.

It is found in the secreted. Functionally, postsynaptic neurotoxin. In Cyriopagopus hainanus (Chinese bird spider), this protein is U4-theraphotoxin-Hhn1ab.